The primary structure comprises 253 residues: Endonuclease NucS (253 aa).

The disordered stretch occupies residues 63-91; sequence IDDPDTDFTDGSSVGNSEEQGTDGSAHTA. Residues 71 to 87 are compositionally biased toward polar residues; the sequence is TDGSSVGNSEEQGTDGS.

It belongs to the NucS endonuclease family.

It localises to the cytoplasm. Functionally, cleaves both 3' and 5' ssDNA extremities of branched DNA structures. In Corynebacterium kroppenstedtii (strain DSM 44385 / JCM 11950 / CIP 105744 / CCUG 35717), this protein is Endonuclease NucS.